The chain runs to 167 residues: CGG triplet repeat-binding protein 1 (167 aa).

Ser-56 is subject to Phosphoserine. The short motif at 80–84 (RKKQR) is the Nuclear localization signal element. Ser-164 bears the Phosphoserine mark.

In terms of tissue distribution, ubiquitous. Highly expressed in placenta, thymus, lymph nodes, cerebellum and cerebral cortex. Low expression in other regions of the brain.

It is found in the nucleus. Functionally, binds to nonmethylated 5'-d(CGG)(n)-3' trinucleotide repeats in the FMR1 promoter. May play a role in regulating FMR1 promoter. The chain is CGG triplet repeat-binding protein 1 (CGGBP1) from Homo sapiens (Human).